Here is a 389-residue protein sequence, read N- to C-terminus: Ethanolamine-phosphate cytidylyltransferase (389 aa).

The segment at Met1–Arg20 is disordered. Residues Ala221–Phe222, His229–Phe232, Lys259, His307–Thr310, and Ser336–Leu340 each bind CTP. Ser338 carries the post-translational modification Phosphoserine. Thr341 and Thr342 each carry phosphothreonine.

It belongs to the cytidylyltransferase family. In terms of tissue distribution, strongest expression in liver, heart, and skeletal muscle.

It catalyses the reaction phosphoethanolamine + CTP + H(+) = CDP-ethanolamine + diphosphate. It functions in the pathway phospholipid metabolism; phosphatidylethanolamine biosynthesis; phosphatidylethanolamine from ethanolamine: step 2/3. In terms of biological role, ethanolamine-phosphate cytidylyltransferase that catalyzes the second step in the synthesis of phosphatidylethanolamine (PE) from ethanolamine via the CDP-ethanolamine pathway. Phosphatidylethanolamine is a dominant inner-leaflet phospholipid in cell membranes, where it plays a role in membrane function by structurally stabilizing membrane-anchored proteins, and participates in important cellular processes such as cell division, cell fusion, blood coagulation, and apoptosis. The chain is Ethanolamine-phosphate cytidylyltransferase (PCYT2) from Homo sapiens (Human).